The following is a 542-amino-acid chain: CTP synthase (542 aa).

The amidoligase domain stretch occupies residues 1–265; it reads MARYVFITGG…DSEVLSAFGI (265 aa). Serine 13 lines the CTP pocket. Serine 13 contributes to the UTP binding site. An ATP-binding site is contributed by 14–19; sequence SLGKGI. Tyrosine 54 is a binding site for L-glutamine. Aspartate 71 provides a ligand contact to ATP. Mg(2+) is bound by residues aspartate 71 and glutamate 139. CTP contacts are provided by residues 146 to 148, 186 to 191, and lysine 222; these read DIE and KTKPTQ. UTP contacts are provided by residues 186 to 191 and lysine 222; that span reads KTKPTQ. The Glutamine amidotransferase type-1 domain maps to 291–541; sequence TIAVVGKYTG…IEAAIEQSRL (251 aa). Glycine 353 provides a ligand contact to L-glutamine. Cysteine 380 serves as the catalytic Nucleophile; for glutamine hydrolysis. L-glutamine is bound by residues 381 to 384, glutamate 404, and arginine 469; that span reads FGMQ. Active-site residues include histidine 514 and glutamate 516.

It belongs to the CTP synthase family. Homotetramer.

The enzyme catalyses UTP + L-glutamine + ATP + H2O = CTP + L-glutamate + ADP + phosphate + 2 H(+). The catalysed reaction is L-glutamine + H2O = L-glutamate + NH4(+). It catalyses the reaction UTP + NH4(+) + ATP = CTP + ADP + phosphate + 2 H(+). The protein operates within pyrimidine metabolism; CTP biosynthesis via de novo pathway; CTP from UDP: step 2/2. Its activity is regulated as follows. Allosterically activated by GTP, when glutamine is the substrate; GTP has no effect on the reaction when ammonia is the substrate. The allosteric effector GTP functions by stabilizing the protein conformation that binds the tetrahedral intermediate(s) formed during glutamine hydrolysis. Inhibited by the product CTP, via allosteric rather than competitive inhibition. Functionally, catalyzes the ATP-dependent amination of UTP to CTP with either L-glutamine or ammonia as the source of nitrogen. Regulates intracellular CTP levels through interactions with the four ribonucleotide triphosphates. In Brucella melitensis biotype 1 (strain ATCC 23456 / CCUG 17765 / NCTC 10094 / 16M), this protein is CTP synthase.